A 93-amino-acid polypeptide reads, in one-letter code: MINTTAERNPSQLSIDTALGGNDPGCIDCGPTFHLETDTATTRNGTSSFGDRIRSFCERARSLISNFVTWRSRNESCEVLAEIPQEKEVESTL.

This is an uncharacterized protein from Gallid herpesvirus 2 (strain Chicken/Md5/ATCC VR-987) (GaHV-2).